The sequence spans 456 residues: Equilibrative nucleoside transporter 1 (456 aa).

The Cytoplasmic portion of the chain corresponds to 2-12; that stretch reads TTSHQPQDRYK. The chain crosses the membrane as a helical span at residues 13–29; it reads AVWLIFFMLGLGTLLPW. At 30 to 82 the chain is on the extracellular side; sequence NFFMTATQYFTNRLDMSQNVSLVTAELSKDAQASAAPAAPLPERNSLSAIFNN. A glycan (N-linked (GlcNAc...) asparagine) is linked at asparagine 48. The chain crosses the membrane as a helical span at residues 83-107; that stretch reads VMTLCAMLPLLLFTYLNSFLHQRIP. Residues 108 to 111 lie on the Cytoplasmic side of the membrane; that stretch reads QSVR. Residues 112-130 form a helical membrane-spanning segment; that stretch reads ILGSLVAILLVFLITAILV. At 131–138 the chain is on the extracellular side; the sequence is KVQLDALP. The chain crosses the membrane as a helical span at residues 139 to 157; the sequence is FFVITMIKIVLINSFGAIL. Topologically, residues 158–174 are cytoplasmic; that stretch reads QGSLFGLAGLLPASYTA. Residues 175-199 traverse the membrane as a helical segment; it reads PIMSGQGLAGFFASVAMICAIASGS. Residues 200–206 lie on the Extracellular side of the membrane; the sequence is ELSESAF. The helical transmembrane segment at 207–227 threads the bilayer; that stretch reads GYFITACAVIILTIICYLGLP. Residues 228–291 are Cytoplasmic-facing; the sequence is RLEFYRYYQQ…IKAILKNISV (64 aa). Residues serine 254, serine 269, and serine 273 each carry the phosphoserine modification. Residues 254-266 are compositionally biased toward basic and acidic residues; the sequence is SKGEEPRAGKEES. A disordered region spans residues 254–276; that stretch reads SKGEEPRAGKEESGVSVSNSQPT. The chain crosses the membrane as a helical span at residues 292-311; it reads LAFSVCFIFTITIGMFPAVT. Over 312–323 the chain is Extracellular; that stretch reads VEVKSSIAGSST. Residues 324-342 form a helical membrane-spanning segment; that stretch reads WERYFIPVSCFLTFNIFDW. Over 343–359 the chain is Cytoplasmic; sequence LGRSLTAVFMWPGKDSR. A helical transmembrane segment spans residues 360 to 378; it reads WLPSLVLARLVFVPLLLLC. Residues 379 to 393 are Extracellular-facing; that stretch reads NIKPRRYLTVVFEHD. Residues 394 to 413 form a helical membrane-spanning segment; the sequence is AWFIFFMAAFAFSNGYLASL. Topologically, residues 414–431 are cytoplasmic; it reads CMCFGPKKVKPAEAETAG. The chain crosses the membrane as a helical span at residues 432-452; it reads AIMAFFLCLGLALGAVFSFLF. Residues 453 to 456 lie on the Extracellular side of the membrane; sequence RAIV.

This sequence belongs to the SLC29A/ENT transporter (TC 2.A.57) family. Identified in a complex with STOM. Glycosylated. In terms of tissue distribution, expressed in testis at the blood-testis barrier (at protein level). Detected in erythrocytes (at protein level). Expressed at relatively high levels in cerebral cortex, particularly the frontal and parietal lobes, and the thalamus and basal ganglia (at protein level). In the midbrain expressed at moderate levels, whereas in the other areas of the brainstem, namely medulla and pons, cerebellum and the hippocampus expressed at lower amounts when compared to the other brain regions (at protein level). Expressed in Langerhans cells and lymphocytes in the pancreas (at protein level). Expressed in kidney, in polarized renal epithelial cells. Expressed in adipose tissues. Expressed in placenta. Expressed in small intestine.

The protein localises to the basolateral cell membrane. Its subcellular location is the apical cell membrane. The protein resides in the cell membrane. The catalysed reaction is adenosine(in) = adenosine(out). It catalyses the reaction guanosine(in) = guanosine(out). It carries out the reaction inosine(in) = inosine(out). The enzyme catalyses uridine(out) = uridine(in). The catalysed reaction is thymidine(in) = thymidine(out). It catalyses the reaction cytidine(in) = cytidine(out). It carries out the reaction adenine(out) = adenine(in). The enzyme catalyses guanine(out) = guanine(in). The catalysed reaction is thymine(out) = thymine(in). It catalyses the reaction uracil(in) = uracil(out). It carries out the reaction hypoxanthine(out) = hypoxanthine(in). With respect to regulation, transporter activity is sensitive to low concentrations of the inhibitor nitrobenzylmercaptopurine riboside (NBMPR). Inhibited by dilazep. Inhibited by dipyridamole. Inhibited by hypoxanthine. Inhibited by azidothymidine (AZT). Inhibited by dideoxycytidine (ddC). Inhibited by dideoxyinosine (ddI). Inhibited by draflazine. Inhibited by soluflazine. Inhibited by cladribine. Inhibited by capecitabine. Inhibited by clofarabine. Inhibited by ribavirin. Modestly inhibited by acyclovir. Modestly inhibited by 5-fluorouracil. Its function is as follows. Uniporter involved in the facilitative transport of nucleosides and nucleobases, and contributes to maintaining their cellular homeostasis. Functions as a Na(+)-independent transporter. Involved in the transport of nucleosides such as adenosine, guanosine, inosine, uridine, thymidine and cytidine. Also transports purine nucleobases (hypoxanthine, adenine, guanine) and pyrimidine nucleobases (thymine, uracil). Mediates basolateral nucleoside uptake into Sertoli cells, thereby regulating the transport of nucleosides in testis across the blood-testis barrier. Regulates inosine levels in brown adipocytes tissues (BAT) and extracellular inosine levels, which controls BAT-dependent energy expenditure. The sequence is that of Equilibrative nucleoside transporter 1 from Homo sapiens (Human).